We begin with the raw amino-acid sequence, 566 residues long: Sister chromatid cohesion protein 1 (566 aa).

Ser161 bears the Phosphoserine mark. Ser175 bears the Phosphoserine; by CDC5 mark. An N6-acetyllysine; by ECO1 modification is found at Lys210. Residue Ser263 is modified to Phosphoserine; by CDC5. Phosphoserine is present on Ser307. The tract at residues 325–356 is disordered; that stretch reads SIQIDEETENSESIASSNTYKEERSNNLLTPQ. Phosphothreonine is present on Thr354.

This sequence belongs to the rad21 family. In terms of assembly, interacts directly with IRR1/SCC3 in cohesin complex. Cohesin complexes are composed of the SMC1 and SMC3 heterodimer attached via their hinge domain, MCD1/SCC1 which link them, and IRR1, which interacts with MCD1. The cohesin complex also interacts with SCC2, which is required for its association with chromosomes. Cleaved by ESP1 at the onset of anaphase. Post-translationally, phosphorylated by CDC5/Polo-like kinase at the onset of anaphase. Phosphorylation takes places at proximity to cleavage sites and is required for an efficient cleavage by ESP1. In terms of processing, acetylated by ECO1.

It is found in the nucleus. Its subcellular location is the chromosome. The protein localises to the centromere. Functionally, cleavable component of the cohesin complex involved in chromosome cohesion during cell cycle. The cohesin complex is required for the cohesion of sister chromatids after DNA replication. The cohesin complex apparently forms a large proteinaceous ring within which sister chromatids can be trapped. At metaphase-anaphase transition, this protein is cleaved by ESP1 and dissociates from chromatin, allowing sister chromatids to segregate. In Saccharomyces cerevisiae (strain ATCC 204508 / S288c) (Baker's yeast), this protein is Sister chromatid cohesion protein 1 (MCD1).